The sequence spans 478 residues: Zinc metalloproteinase/disintegrin (478 aa).

An N-terminal signal peptide occupies residues 1–20 (MIEVLLVTICLAAFPYQGSS). A propeptide spanning residues 21-187 (IILESGNVND…PIKKASQSNL (167 aa)) is cleaved from the precursor. Disulfide bonds link Cys-304–Cys-384, Cys-344–Cys-368, and Cys-346–Cys-351. His-329 serves as a coordination point for Zn(2+). Residue Glu-330 is part of the active site. Positions 333 and 339 each coordinate Zn(2+). Residues 390 to 405 (LRTDTVSTPVSGNELL) constitute a propeptide that is removed on maturation. Positions 397–478 (TPVSGNELLE…AGCPRNPFHA (82 aa)) constitute a Disintegrin domain. Intrachain disulfides connect Cys-411-Cys-426, Cys-413-Cys-421, Cys-420-Cys-443, Cys-434-Cys-440, Cys-439-Cys-464, and Cys-452-Cys-471. The Cell attachment site motif lies at 456–458 (RGD).

It belongs to the venom metalloproteinase (M12B) family. P-II subfamily. P-IIa sub-subfamily. In terms of assembly, monomer. In terms of tissue distribution, expressed by the venom gland.

Its subcellular location is the secreted. In terms of biological role, binds alpha-5/beta-1 (ITGAV/ITGB1), alpha-V/beta-3 (ITGAV/ITGB3) and alpha-M/beta-2 (ITGAM/ITGB2) integrins. Is a potent inhibitor of platelet aggregation induced by ADP, collagen, and thrombin. Induces neutrophil chemotaxis and inhibits the chemotaxis of human neutrophils toward fMLP, IL-8, and jarastatin itself. Directly activates an integrin-coupled signaling and modulate the MAPK pathway in different ways, leading the neutrophils to express different functional response. Induces Erk-2 translocation to nucleus and a delay of the spontaneous apoptosis of neutrophils. Increases the IL-8 mRNA levels in neutrophils. When injected simultaneously with melanoma cells in mice, jarastatin, flavoridin (FL) and kistrin (KR) significantly reduce tumor lung colonization. Inhibits mouse melanoma B16F10 cell growth in vitro. When it interacts with melanoma cells, it induces actin cytoskeleton rearrangement, increasing actin polymerization and PTK2/FAK1 phosphorylation. Interferes with NF-kappaB translocation in melanoma cells. This chain is Zinc metalloproteinase/disintegrin, found in Bothrops jararaca (Jararaca).